A 492-amino-acid chain; its full sequence is Monocarboxylate transporter 3 (492 aa).

The Cytoplasmic portion of the chain corresponds to 1 to 14 (MGAGGPRRGAGPPD). A helical membrane pass occupies residues 15 to 35 (GGWGWVVLGACFVVTGFAYGF). Residues 36-58 (PKAVSVFFRELKRDFGAGYSDTA) lie on the Extracellular side of the membrane. The helical transmembrane segment at 59–79 (WVSSIMLAMLYGTGPLSSILV) threads the bilayer. Topologically, residues 80-85 (TRFGCR) are cytoplasmic. A helical transmembrane segment spans residues 86–106 (PVMLAGGLLASAGMILASFAS). The Extracellular portion of the chain corresponds to 107–115 (RLVELYLTA). A helical membrane pass occupies residues 116 to 136 (GVLTGLGLALNFQPSLIMLGL). The Cytoplasmic segment spans residues 137–146 (YFERRRPLAN). A helical membrane pass occupies residues 147–167 (GLAAAGSPVFLSMLSPLGQLL). Topologically, residues 168–172 (GERFG) are extracellular. The chain crosses the membrane as a helical span at residues 173–193 (WRGGFLLFGGLLLHCCACGAV). The Cytoplasmic segment spans residues 194–228 (MRPPPGPPPRRDPSPHGGPARRRRLLDVAVCTDRA). Residues 229-249 (FVVYVVTKFLMALGLFVPAIL) form a helical membrane-spanning segment. Topologically, residues 250 to 257 (LVNYAKDA) are extracellular. Residues 258–278 (GVPDAEAAFLLSIVGFVDIVA) traverse the membrane as a helical segment. At 279–293 (RPACGALAGLGRLRP) the chain is on the cytoplasmic side. Residues 294 to 314 (HVPYLFSLALLANGLTDLISA) traverse the membrane as a helical segment. Topologically, residues 315–318 (RARS) are extracellular. A helical transmembrane segment spans residues 319–339 (YGTLVAFCIAFGLSYGMVGAL). Residues 340 to 352 (QFEVLMATVGAPR) are Cytoplasmic-facing. The helical transmembrane segment at 353–373 (FPSALGLVLLVEAVAVLIGPP) threads the bilayer. The Extracellular segment spans residues 374–386 (SAGRLVDALKNYE). A helical membrane pass occupies residues 387–407 (IIFYLAGSEVALAGVFMAVTT). The Cytoplasmic segment spans residues 408 to 492 (YCCLRCSKNI…GGHEARGQKA (85 aa)). Positions 419–492 (SGRSAEGGAS…GGHEARGQKA (74 aa)) are disordered. Basolateral sorting signal regions lie at residues 426–460 (GASD…VLSP) and 461–482 (RAGS…HESI). The segment covering 476-492 (ELDHESIGGHEARGQKA) has biased composition (basic and acidic residues).

Belongs to the major facilitator superfamily. Monocarboxylate porter (TC 2.A.1.13) family. In terms of tissue distribution, expressed exclusively in retinal pigment epithelium and choroid plexus epithelium.

It is found in the basolateral cell membrane. It carries out the reaction (S)-lactate(in) + H(+)(in) = (S)-lactate(out) + H(+)(out). Its function is as follows. Probable retinal pigment epithelium (RPE)-specific proton-coupled L-lactate transporter. May facilitate transport of lactate and H(+) out of the retina and could therefore play an essential role in maintenance of metabolic and ionic homeostasis of the outer retina. The protein is Monocarboxylate transporter 3 (Slc16a8) of Mus musculus (Mouse).